Reading from the N-terminus, the 219-residue chain is PKHD-type hydroxylase SYNPCC7002_A2658 (219 aa).

Residues 78–172 form the Fe2OG dioxygenase domain; the sequence is TVHTLLFSRY…RLVAVGWVQS (95 aa). Fe cation is bound by residues His-96, Asp-98, and His-153. Arg-163 provides a ligand contact to 2-oxoglutarate.

Requires Fe(2+) as cofactor. The cofactor is L-ascorbate.

The polypeptide is PKHD-type hydroxylase SYNPCC7002_A2658 (Picosynechococcus sp. (strain ATCC 27264 / PCC 7002 / PR-6) (Agmenellum quadruplicatum)).